The chain runs to 247 residues: UPF0309 protein Lm4b_02611 (247 aa).

The region spanning 31-214 is the SIS domain; the sequence is VAESIENDGV…ETMVNDNFTP (184 aa).

Belongs to the UPF0309 family.

The polypeptide is UPF0309 protein Lm4b_02611 (Listeria monocytogenes serotype 4b (strain CLIP80459)).